The sequence spans 85 residues: MATKKAGGSTRNGRDSEAKRLGVKRFGGESVLAGSIIVRQRGTKFHAGSNVGMGRDHTLFATADGKVKFEVKGEKSRKYVSIVTE.

Residues 1 to 20 (MATKKAGGSTRNGRDSEAKR) are disordered.

It belongs to the bacterial ribosomal protein bL27 family.

In Actinobacillus succinogenes (strain ATCC 55618 / DSM 22257 / CCUG 43843 / 130Z), this protein is Large ribosomal subunit protein bL27.